Here is a 323-residue protein sequence, read N- to C-terminus: Aquaporin NIP3-1 (323 aa).

Methionine 1 bears the N-acetylmethionine mark. Helical transmembrane passes span 45-65 (LIGE…AIVV) and 73-93 (VTLP…IYSI). The NPA 1 motif lies at 102–104 (NPA). 3 helical membrane passes run 122-142 (GYIA…RLVF), 167-187 (TSFV…SAVA), and 196-216 (FAGI…GPIS). The NPA 2 signature appears at 221-223 (NPA). The chain crosses the membrane as a helical span at residues 239–259 (WLYIVSPVIGALSGAWTYGLL).

It belongs to the MIP/aquaporin (TC 1.A.8) family. NIP (TC 1.A.8.12) subfamily.

Its subcellular location is the membrane. Aquaporins facilitate the transport of water and small neutral solutes across cell membranes. The sequence is that of Aquaporin NIP3-1 (NIP3-1) from Arabidopsis thaliana (Mouse-ear cress).